The following is a 503-amino-acid chain: Protein O-glucosyltransferase 3 (503 aa).

Residues Met-1 to Gly-19 form the signal peptide. The Filamin repeat unit spans residues Gly-19–Gly-129. N-linked (GlcNAc...) asparagine glycosylation is found at Asn-56 and Asn-302. A Prevents secretion from ER motif is present at residues Arg-500 to Leu-503.

This sequence belongs to the KDELC family.

It localises to the endoplasmic reticulum lumen. It carries out the reaction L-seryl-[EGF-like domain protein] + UDP-alpha-D-glucose = 3-O-(beta-D-glucosyl)-L-seryl-[EGF-like domain protein] + UDP + H(+). It catalyses the reaction L-seryl-[EGF-like domain protein] + UDP-alpha-D-xylose = 3-O-(beta-D-xylosyl)-L-seryl-[EGF-like domain protein] + UDP + H(+). It participates in protein modification; protein glycosylation. Protein glucosyltransferase that catalyzes the transfer of glucose from UDP-glucose to a serine residue within the consensus sequence peptide C-X-N-T-X-G-S-F-X-C. Can also catalyze the transfer of xylose from UDP-xylose but less efficiently. Specifically targets extracellular EGF repeats of proteins such as NOTCH1, NOTCH3, FBN1, FBN2 and LTBP1. May regulate the transport of NOTCH1 and NOTCH3 to the plasma membrane and thereby the Notch signaling pathway. This chain is Protein O-glucosyltransferase 3 (Poglut3), found in Mus musculus (Mouse).